The primary structure comprises 1474 residues: Alpha-2-macroglobulin (1474 aa).

Residues 1-23 form the signal peptide; sequence MGKNKLLHPSLVLLLLVLLPTDA. Cys48 and Cys86 form a disulfide bridge. Residues Asn55, Asn70, and Asn247 are each glycosylated (N-linked (GlcNAc...) asparagine). Intrachain disulfides connect Cys251–Cys299 and Cys269–Cys287. Residues Asn396 and Asn410 are each glycosylated (N-linked (GlcNAc...) asparagine). Cystine bridges form between Cys470–Cys563, Cys595–Cys771, Cys642–Cys689, Cys821–Cys849, Cys847–Cys883, Cys921–Cys1321, Cys1079–Cys1127, and Cys1352–Cys1467. Residues 690–728 form a bait region region; sequence PQLQQYEMHGPEGLRVGFYESDVMGRGHARLVHAEEPPT. Residues Gln693 and Gln694 each participate in an isoglutamyl lysine isopeptide (Gln-Lys) (interchain with K-? in other proteins) cross-link. 3 inhibitory regions span residues 704–709, 719–723, and 730–735; these read RVGFYE, RLVHA, and TVRKYF. Residue Asn869 is glycosylated (N-linked (GlcNAc...) asparagine). The isoglutamyl cysteine thioester (Cys-Gln) cross-link spans 972 to 975; that stretch reads CGEQ. Asn991 is a glycosylation site (N-linked (GlcNAc...) asparagine). A glycan (N-linked (GlcNAc...) asparagine) is linked at Asn1424.

It belongs to the protease inhibitor I39 (alpha-2-macroglobulin) family. Homotetramer; disulfide-linked. Plasma.

The protein localises to the secreted. Functionally, is able to inhibit all four classes of proteinases by a unique 'trapping' mechanism. This protein has a peptide stretch, called the 'bait region' which contains specific cleavage sites for different proteinases. When a proteinase cleaves the bait region, a conformational change is induced in the protein which traps the proteinase. The entrapped enzyme remains active against low molecular weight substrates (activity against high molecular weight substrates is greatly reduced). Following cleavage in the bait region a thioester bond is hydrolyzed and mediates the covalent binding of the protein to the proteinase. The chain is Alpha-2-macroglobulin (A2M) from Pongo abelii (Sumatran orangutan).